Consider the following 1302-residue polypeptide: MEEASLCLGVSSTAPEAEPHLSGPVLNGQYAMSQKLHQITSQLSHAFPELHPRPNPEEKTPAALEEKAHVPMSGQSMGSQMALLANQLGRDVDNSLNGRVDLQQFLNGQNLGIMSQMSDIEDDARKNRKYPCPLCGKRFRFNSILSLHMRTHTGEKPFKCPYCDHRAAQKGNLKIHLRTHKLGNLGKGRGRVREENRLLHELEERAILRDKQMKGSLLQPRSDLKPLAHAQQAPLATCNLALPPNHSVPDVAHPAPSPKPANLQEDSVTPAAGFRCTFCKGKFKKREELDRHIRILHKPYKCTLCDFAASQEEELISHVEKAHITAESAQGQGPNGGGEQSANEFRCEVCGQVFSQAWFLKGHMRKHKDSFEHCCQICGRRFKEPWFLKNHMKVHLNKLSVKNKSPTEPEVAVPMGGLSQEAHANLYSRYLSCLQSGFMAPDKASLNEPSQLYGKGELPAKEKEVLGKLLSPISSMAHSVPEGDKHSLLGCLNLVPPLKSSCIERLQAAAKAAEMDPVNSYQAWQLMARGMAMEHGFLSKEHQLSRNHEDPLANTGVLFDKEKREYVLVGADGSKQKMPADLVHSTKVGNQRDLPNKLDPLEGSREFLSHGLNQTLDYNLQGPGNMKEKPTECPDCGRVFRTYHQVVVHSRVHKRDRKSDEDALHVGVGLEERRGSGSDQESQSVSRSTTPGSSNVTEESGAGGGLSQTGSAQEDSPHPSSPSSSDIGEEAGRAGGVQQQALLRDRNLGSAMKDCPYCGKTFRTSHHLKVHLRIHTGEKPYKCPHCDYAGTQSASLKYHLERHHRERQNGAGPLSGQPPNQEHKDETSSKAPMFIRPDILRGAFKGLPGIDFRGGPASQQWTAGMLSSGDHSGQATGMPSELSSDALKGSDLPSKSSHYSEIGRAYQNIVSNGVNFQGSLQAFMDSFVLSSLKKKDTKDKVPSDAHPMKAHTAEGGEEKASMKPSQRKSEKSQYEPLDLSVRPDAPTLPGSSVTVQDSIAWHGCLFCAFTTSSMELMALHLQANHLGRAKRKDHPTGVTVNCKEQGREASKVSVLPSLQSNKEMALPSAVGVLDSAPEKLAQGPAKETLGDPKSGQWPNHMDPAFCTFPSDFYKQFGVYPAMVGSGAPGSCLNKNTEGKTHPDDDAPILIPETTNKNTTDDLSDIASSEDMDSSKGENNEDEELDTEPEMTSKPLSALSKDGSSEGGDSLLSPGAPQPIQGLVSPLAQAAEEQWHSPGLLPAQDPSAGLPKPERGPPGLEKPMSMLSVLRAYSADGLAAFNGLASSTANSGCIKRPDLCGKF.

The tract at residues 1 to 26 (MEEASLCLGVSSTAPEAEPHLSGPVL) is disordered. 7 consecutive C2H2-type zinc fingers follow at residues 130 to 152 (YPCP…MRTH), 158 to 180 (FKCP…LRTH), 274 to 297 (FRCT…RILH), 300 to 323 (YKCT…EKAH), 345 to 367 (FRCE…MRKH), 373 to 395 (HCCQ…MKVH), and 631 to 653 (TECP…SRVH). The tract at residues 650–736 (SRVHKRDRKS…IGEEAGRAGG (87 aa)) is disordered. A compositionally biased stretch (basic and acidic residues) spans 657 to 676 (RKSDEDALHVGVGLEERRGS). The span at 677-698 (GSDQESQSVSRSTTPGSSNVTE) shows a compositional bias: polar residues. 2 consecutive C2H2-type zinc fingers follow at residues 753–775 (KDCP…LRIH) and 781–803 (YKCP…LERH). Disordered regions lie at residues 804–832 (HRER…SKAP), 855–897 (GPAS…SKSS), 935–988 (KDTK…APTL), and 1133–1261 (NKNT…GLEK). Serine 828 and serine 829 each carry phosphoserine. Residues 869–883 (GDHSGQATGMPSELS) show a composition bias toward polar residues. A compositionally biased stretch (basic and acidic residues) spans 935–973 (KDTKDKVPSDAHPMKAHTAEGGEEKASMKPSQRKSEKSQ). 2 stretches are compositionally biased toward acidic residues: residues 1161–1171 (DLSDIASSEDM) and 1179–1188 (NEDEELDTEP). Positions 1198 to 1212 (LSKDGSSEGGDSLLS) are enriched in low complexity.

The protein belongs to the krueppel C2H2-type zinc-finger protein family. As to expression, expressed predominantly in the brain, while a weak signal is also detected in the heart and testis. Expression is abundant in neuronal cells of the cerebral cortex, hippocampus and hypothalamic area (at protein level).

The protein localises to the nucleus. Its function is as follows. Transcriptional repressor that negatively regulates neuron differentiation by repressing retinoic acid-induced gene transcription. Binds and interrupts RARA from binding to retinoic acid response elements (RARE) composed of tandem 5'-AGGTCA-3' sites known as DR1-DR5. Recognizes and binds 2 copies of the core DNA sequence 5'-CCCCCA-3'. The protein is Zinc finger protein 536 (Znf536) of Mus musculus (Mouse).